The primary structure comprises 574 residues: Developmental and secondary metabolism regulator veA (574 aa).

Disordered stretches follow at residues 1 to 22 (MATRAPLAPPPNETEASVSRIT), 39 to 60 (ERARACGAGAKSSADRRPVDPP), 255 to 500 (RSSD…GAGK), and 513 to 540 (RSYEDSFGHDDRPLYNGMRPDTESYPRR). The Velvet domain occupies 25-230 (GKKLTYKLNV…AEQGCRVRIR (206 aa)). The Nuclear localization signal signature appears at 39 to 44 (ERARAC). 2 stretches are compositionally biased toward pro residues: residues 314 to 323 (RPLPPAPGPA) and 330 to 341 (PAPPAPPAPPSH). 4 stretches are compositionally biased toward polar residues: residues 343–353 (PGYQSHLSFGS), 385–394 (HARNPSTSAE), 406–415 (RMSTERSSYP), and 448–458 (VAQSAAPRSQT). The interval 457–501 (QTPSSSLVPSLPPLKALSGDYPNNLSQSSSSTSQSPSHDLGAGKK) is PEST. Composition is skewed to low complexity over residues 459-474 (PSSSLVPSLPPLKALS) and 482-493 (SQSSSSTSQSPS). The span at 513 to 525 (RSYEDSFGHDDRP) shows a compositional bias: basic and acidic residues.

Belongs to the velvet family. VeA subfamily. In terms of assembly, component of the heterotrimeric velvet complex composed of laeA, veA and velB; VeA acting as a bridging protein between laeA and velB.

It localises to the nucleus. The protein localises to the cytoplasm. Functionally, component of the velvet transcription factor complex that controls sexual/asexual developmental ratio in response to light, promoting sexual development in the darkness while stimulating asexual sporulation under illumination. The velvet complex hat acts as a global regulator for secondary metabolite gene expression. Controls the expression of the penicillin gene cluster. This chain is Developmental and secondary metabolism regulator veA, found in Aspergillus oryzae (strain ATCC 42149 / RIB 40) (Yellow koji mold).